The primary structure comprises 830 residues: Ent-cassa-12,15-diene synthase (830 aa).

The disordered stretch occupies residues 1 to 50 (MMLLGSPSSGGYGGKFAGASPAGGTTTMAPSAKQPSSRAPPPGITGGRND). Over residues 23–37 (GGTTTMAPSAKQPSS) the composition is skewed to polar residues. Mg(2+) is bound by residues Asp577, Asp581, Asn721, and Glu729. The DDXXD motif signature appears at 577-581 (DDLFD).

Belongs to the terpene synthase family. It depends on Mg(2+) as a cofactor. Expressed in roots and stems.

It carries out the reaction ent-copalyl diphosphate = ent-cassa-12,15-diene + diphosphate. Functionally, involved in phytocassane phytoalexins biosynthesis. Catalyzes the conversion of ent-copalyl diphosphate to the phytoalexin precursor ent-cassa-12,15-diene. This chain is Ent-cassa-12,15-diene synthase (KSL7), found in Oryza sativa subsp. indica (Rice).